The sequence spans 195 residues: SXP/RAL-2-like protein 2 (195 aa).

Positions 162-195 are disordered; it reads EKVHGGSHGGLRGGPGGPRDGPRGGPRGGPRGGR. Residues 167–195 are compositionally biased toward gly residues; the sequence is GSHGGLRGGPGGPRDGPRGGPRGGPRGGR.

It belongs to the SXP/RAL-2 family.

The polypeptide is SXP/RAL-2-like protein 2 (Caenorhabditis elegans).